The following is a 444-amino-acid chain: Protein CLP1 homolog (444 aa).

Residues Glu-33, Lys-72, and 140–145 (DSGKST) contribute to the ATP site.

This sequence belongs to the Clp1 family. Clp1 subfamily. Interacts with PCFS4 and SYM5. Forms a complex with cleavage and polyadenylation specificity factor (CPSF) subunits CPSF30, CPSF100, PCFS1, PCFS4, PCFS5, CPSF160 and FY.

Its subcellular location is the nucleus. Required for endonucleolytic cleavage during polyadenylation-dependent pre-mRNA 3'-end formation. Functions in gametophyte, embryo and postembryotic development. This Arabidopsis thaliana (Mouse-ear cress) protein is Protein CLP1 homolog (CLPS3).